The sequence spans 174 residues: RNA pyrophosphohydrolase (174 aa).

The Nudix hydrolase domain maps to 6 to 145; it reads GYRPNVGMII…KRRVYWQALQ (140 aa). Positions 38 to 59 match the Nudix box motif; it reads GGIDYAETPEQAMFRELEEEVG.

It belongs to the Nudix hydrolase family. RppH subfamily. It depends on a divalent metal cation as a cofactor.

In terms of biological role, accelerates the degradation of transcripts by removing pyrophosphate from the 5'-end of triphosphorylated RNA, leading to a more labile monophosphorylated state that can stimulate subsequent ribonuclease cleavage. This chain is RNA pyrophosphohydrolase, found in Acidithiobacillus ferrooxidans (strain ATCC 53993 / BNL-5-31) (Leptospirillum ferrooxidans (ATCC 53993)).